We begin with the raw amino-acid sequence, 124 residues long: Large ribosomal subunit protein bL12 (124 aa).

The protein belongs to the bacterial ribosomal protein bL12 family. As to quaternary structure, homodimer. Part of the ribosomal stalk of the 50S ribosomal subunit. Forms a multimeric L10(L12)X complex, where L10 forms an elongated spine to which 2 to 4 L12 dimers bind in a sequential fashion. Binds GTP-bound translation factors.

Its function is as follows. Forms part of the ribosomal stalk which helps the ribosome interact with GTP-bound translation factors. Is thus essential for accurate translation. This is Large ribosomal subunit protein bL12 from Desulforamulus reducens (strain ATCC BAA-1160 / DSM 100696 / MI-1) (Desulfotomaculum reducens).